The chain runs to 602 residues: Aspartate--tRNA(Asp/Asn) ligase (602 aa).

L-aspartate is bound at residue Glu-170. The aspartate stretch occupies residues 194 to 197; it reads QLFK. An L-aspartate-binding site is contributed by Arg-216. ATP-binding positions include 216–218 and Gln-225; that span reads RDE. Position 448 (His-448) interacts with L-aspartate. Glu-482 provides a ligand contact to ATP. Arg-489 serves as a coordination point for L-aspartate. 534-537 serves as a coordination point for ATP; the sequence is GWDR. Residues 559 to 602 form a disordered region; it reads GGVDPLTDAPAPISAQQRKESGIDAKPEKKSEDKKSEGDTAEAK. Over residues 575–602 the composition is skewed to basic and acidic residues; sequence QRKESGIDAKPEKKSEDKKSEGDTAEAK.

The protein belongs to the class-II aminoacyl-tRNA synthetase family. Type 1 subfamily. In terms of assembly, homodimer.

Its subcellular location is the cytoplasm. The enzyme catalyses tRNA(Asx) + L-aspartate + ATP = L-aspartyl-tRNA(Asx) + AMP + diphosphate. Functionally, aspartyl-tRNA synthetase with relaxed tRNA specificity since it is able to aspartylate not only its cognate tRNA(Asp) but also tRNA(Asn). Reaction proceeds in two steps: L-aspartate is first activated by ATP to form Asp-AMP and then transferred to the acceptor end of tRNA(Asp/Asn). This is Aspartate--tRNA(Asp/Asn) ligase from Rhodococcus erythropolis (strain PR4 / NBRC 100887).